Here is an 86-residue protein sequence, read N- to C-terminus: Large ribosomal subunit protein bL27 (86 aa).

Positions 1–24 are disordered; sequence MAHKKAMGSTENTRDSNPSYLGVK. The segment covering 9-19 has biased composition (polar residues); that stretch reads STENTRDSNPS.

It belongs to the bacterial ribosomal protein bL27 family.

This Salinibacter ruber (strain DSM 13855 / M31) protein is Large ribosomal subunit protein bL27.